The sequence spans 834 residues: Serine-rich coiled-coil domain-containing protein 2 (834 aa).

Positions Pro169–Ser212 are disordered. Polar residues predominate over residues Ser192 to Ser212. Residue Ser223 is modified to Phosphoserine. A compositionally biased stretch (basic and acidic residues) spans Arg426–Asn443. 5 disordered regions span residues Arg426–Lys454, Cys477–Gly509, Asn573–Arg628, Leu695–Val714, and Ala780–Gln834. Ser452 carries the phosphoserine modification. Positions Ser497 to Ser507 are enriched in low complexity. Basic and acidic residues-rich tracts occupy residues Asn573–Val584 and Gly601–Asp611. A coiled-coil region spans residues Asp712–His749. Polar residues-rich tracts occupy residues Pro781–Phe790 and Thr804–Thr816.

Belongs to the CCSER family.

It localises to the cytoplasm. Its subcellular location is the cytoskeleton. Its function is as follows. Microtubule-binding protein which might play a role in microtubule bundling. The chain is Serine-rich coiled-coil domain-containing protein 2 (CCSER2) from Homo sapiens (Human).